The chain runs to 267 residues: Small ribosomal subunit protein uS2 (267 aa).

A disordered region spans residues 237 to 267 (IGESAAAPSEPALETASAEATAEGEQPGSQA). Low complexity predominate over residues 238 to 261 (GESAAAPSEPALETASAEATAEGE).

This sequence belongs to the universal ribosomal protein uS2 family.

This chain is Small ribosomal subunit protein uS2, found in Chelativorans sp. (strain BNC1).